We begin with the raw amino-acid sequence, 352 residues long: Divinyl chlorophyll a/b light-harvesting protein PcbB (352 aa).

6 helical membrane passes run 27–47 (FIAA…AFTL), 89–109 (CTVI…GGIL), 142–162 (FILG…VEWA), 203–223 (VMGG…FHII), 243–263 (AVLS…AFWS), and 307–327 (LANV…WHAL).

The protein belongs to the PsbB/PsbC family. IsiA/Pcb subfamily. In terms of assembly, the antenna complex consists of divinyl chlorophylls (a and b) and divinyl chlorophyll a/b binding proteins and binds more divinyl chlorophyll b than does the antenna complex from high-light-adapted Prochlorococcus. Divinyl chlorophyll a serves as cofactor. The cofactor is divinyl chlorophyll b.

The protein resides in the cellular thylakoid membrane. The antenna complex functions as a light receptor, it captures and delivers excitation energy to photosystems II and I. The Prochlorales pcb genes are not related to higher plant LHCs. The polypeptide is Divinyl chlorophyll a/b light-harvesting protein PcbB (pcbB) (Prochlorococcus marinus (strain NATL2A)).